A 189-amino-acid chain; its full sequence is Chitin synthase 1 (189 aa).

This sequence belongs to the chitin synthase family.

It is found in the cell membrane. The enzyme catalyses [(1-&gt;4)-N-acetyl-beta-D-glucosaminyl](n) + UDP-N-acetyl-alpha-D-glucosamine = [(1-&gt;4)-N-acetyl-beta-D-glucosaminyl](n+1) + UDP + H(+). In terms of biological role, polymerizes chitin, a structural polymer of the cell wall and septum, by transferring the sugar moiety of UDP-GlcNAc to the non-reducing end of the growing chitin polymer. The polypeptide is Chitin synthase 1 (CHS1) (Xylohypha bantiana).